The chain runs to 429 residues: Glutamate-1-semialdehyde 2,1-aminomutase (429 aa).

K265 bears the N6-(pyridoxal phosphate)lysine mark.

This sequence belongs to the class-III pyridoxal-phosphate-dependent aminotransferase family. HemL subfamily. Homodimer. The cofactor is pyridoxal 5'-phosphate.

The protein localises to the cytoplasm. It catalyses the reaction (S)-4-amino-5-oxopentanoate = 5-aminolevulinate. Its pathway is porphyrin-containing compound metabolism; protoporphyrin-IX biosynthesis; 5-aminolevulinate from L-glutamyl-tRNA(Glu): step 2/2. The protein is Glutamate-1-semialdehyde 2,1-aminomutase of Shewanella piezotolerans (strain WP3 / JCM 13877).